We begin with the raw amino-acid sequence, 155 residues long: DNA-directed RNA polymerase II subunit rpb4 (155 aa).

This sequence belongs to the eukaryotic RPB4 RNA polymerase subunit family. In terms of assembly, component of the RNA polymerase II (Pol II) complex consisting of 12 subunits. RPB4 and RPB7 form a subcomplex that protrudes from the 10-subunit Pol II core complex.

The protein resides in the nucleus. Functionally, DNA-dependent RNA polymerase catalyzes the transcription of DNA into RNA using the four ribonucleoside triphosphates as substrates. Component of RNA polymerase II which synthesizes mRNA precursors and many functional non-coding RNAs. Pol II is the central component of the basal RNA polymerase II transcription machinery. It is composed of mobile elements that move relative to each other. RPB4 is part of a subcomplex with RPB7 that binds to a pocket formed by RPB1, RPB2 and RPB6 at the base of the clamp element. The RPB4-RPB7 subcomplex seems to lock the clamp via RPB7 in the closed conformation thus preventing double-stranded DNA to enter the active site cleft. The RPB4-RPB7 subcomplex binds single-stranded DNA and RNA. The sequence is that of DNA-directed RNA polymerase II subunit rpb4 (polr2d) from Dictyostelium discoideum (Social amoeba).